An 88-amino-acid polypeptide reads, in one-letter code: Large ribosomal subunit protein bL27 (88 aa).

A disordered region spans residues 1-23 (MAHKKGTGSTRNGRDSNSKRLGV).

It belongs to the bacterial ribosomal protein bL27 family.

The protein is Large ribosomal subunit protein bL27 of Synechococcus sp. (strain CC9902).